Consider the following 222-residue polypeptide: Acyl-protein thioesterase 1 homolog 2 (222 aa).

Catalysis depends on charge relay system residues serine 116, aspartate 169, and histidine 202.

The protein belongs to the AB hydrolase superfamily. AB hydrolase 2 family.

It is found in the cytoplasm. It localises to the nucleus. The enzyme catalyses S-hexadecanoyl-L-cysteinyl-[protein] + H2O = L-cysteinyl-[protein] + hexadecanoate + H(+). Functionally, hydrolyzes fatty acids from S-acylated cysteine residues in proteins with a strong preference for palmitoylated G-alpha proteins over other acyl substrates. Mediates the deacylation of G-alpha proteins such as GPA1 in vivo, but has weak or no activity toward palmitoylated Ras proteins. Has weak lysophospholipase activity in vitro; however such activity may not exist in vivo. This chain is Acyl-protein thioesterase 1 homolog 2, found in Dictyostelium discoideum (Social amoeba).